Here is a 272-residue protein sequence, read N- to C-terminus: 4-hydroxy-tetrahydrodipicolinate reductase (272 aa).

An NAD(+)-binding site is contributed by 10-15 (GAAGRM). An NADP(+)-binding site is contributed by Arg37. Residues 100–102 (GTT) and 124–127 (SGNM) each bind NAD(+). The active-site Proton donor/acceptor is His157. (S)-2,3,4,5-tetrahydrodipicolinate is bound at residue His158. Lys161 (proton donor) is an active-site residue. (S)-2,3,4,5-tetrahydrodipicolinate is bound at residue 167-168 (GT).

It belongs to the DapB family.

Its subcellular location is the cytoplasm. It carries out the reaction (S)-2,3,4,5-tetrahydrodipicolinate + NAD(+) + H2O = (2S,4S)-4-hydroxy-2,3,4,5-tetrahydrodipicolinate + NADH + H(+). The catalysed reaction is (S)-2,3,4,5-tetrahydrodipicolinate + NADP(+) + H2O = (2S,4S)-4-hydroxy-2,3,4,5-tetrahydrodipicolinate + NADPH + H(+). Its pathway is amino-acid biosynthesis; L-lysine biosynthesis via DAP pathway; (S)-tetrahydrodipicolinate from L-aspartate: step 4/4. Catalyzes the conversion of 4-hydroxy-tetrahydrodipicolinate (HTPA) to tetrahydrodipicolinate. In Methylocella silvestris (strain DSM 15510 / CIP 108128 / LMG 27833 / NCIMB 13906 / BL2), this protein is 4-hydroxy-tetrahydrodipicolinate reductase.